The primary structure comprises 137 residues: Thionin BTH7 (137 aa).

An N-terminal signal peptide occupies residues methionine 1–glycine 28. 4 disulfide bridges follow: cysteine 31/cysteine 68, cysteine 32/cysteine 60, cysteine 40/cysteine 58, and cysteine 44/cysteine 54. A propeptide spans leucine 75 to alanine 137 (acidic domain).

Belongs to the plant thionin (TC 1.C.44) family. 4 C-C subfamily.

Its subcellular location is the secreted. In terms of biological role, thionins are small plant proteins which are toxic to animal cells. They seem to exert their toxic effect at the level of the cell membrane. Their precise function is not known. This Hordeum vulgare (Barley) protein is Thionin BTH7.